Reading from the N-terminus, the 280-residue chain is MTFTKQPPAVHDTDISFPQPHVLVVTLNRPKAFNAIPRPLHPQLAALWAWYDAEPSLRCAVLTGAGKAFCAGADLKEWNDKAAAGQAIGAAGERDPSWATSGFGGLSNRRGKKPVIAAVNGLCLGGGMEMALAADMIVAAAAARFGLPEVKIGVVAVAGALPRLTRIVGRQRASEMALLGRTYAAEEMRSWGVVNHIVPEGGSVVDEALRWAGELAGNSPDSVIVTRAGLLGGWDPVDPVKSTQEIDEGIYKLLEAGENQKEGVKSFVEKRRPVWKDSKL.

The PTS1-type peroxisomal targeting signal motif lies at 278–280; it reads SKL.

The protein belongs to the enoyl-CoA hydratase/isomerase family.

It localises to the peroxisome. It participates in siderophore biosynthesis. Its function is as follows. Mevalonyl-coenzyme A hydratase; part of the gene cluster that mediates the biosynthesis of at least 11 siderophores, including beauverichelin A, dimerumic acid (DA), Na-dimethyl coprogen (NADC), eleutherazine B, ferricrocin (FC), fusarinine A, fusarinine C (FsC), metachelin A, mevalonolactone, rhodotorulic acid (RA) and tenellin. This cocktail of siderophores for iron metabolism is essential for virulence, and more specifically for the fungal virulence in penetrating through the host cuticle. Siderophore synthesis is also involved in conidial germination under iron-deficient conditions. For biosynthesis of fusarinine C, the transacylase SIDF transfers anhydromevalonyl to N(5)-hydroxyornithine. The required anhydromevalonyl-CoA moiety is derived from mevalonate by CoA ligation and dehydration catalyzed by SIDI and sidH respectively. SIDH is not essential for siderophore production, probably due to functional redundancy of this protein family, as there are 15 homologs of SIDH in B.bassiana. This chain is Mevalonyl-coenzyme A hydratase SIDH, found in Beauveria bassiana (strain ARSEF 2860) (White muscardine disease fungus).